The sequence spans 572 residues: Solute carrier family 22 member 16 (572 aa).

The helical transmembrane segment at 21–41 (IFLYFICAFQNISCGIHYLAS) threads the bilayer. Asn57 is a glycosylation site (N-linked (GlcNAc...) asparagine). The next 5 membrane-spanning stretches (helical) occupy residues 156-176 (LIQPTFMFGVLLGAVIFGYLS), 183-203 (LVLWASSTGVFLFGIAAAFTF), 208-228 (FIVARFLLAISGSGYLVVVFV), 244-264 (IHLHSFFAFGTMVVALTGYFV), and 268-288 (WIYQIVLSSVTVPFVLCCWML). The N-linked (GlcNAc...) asparagine glycan is linked to Asn315. The next 6 helical transmembrane spans lie at 359–379 (TLILWLIWFTGCLGFYTFSLN), 389–409 (LNLFLMGVVEIPAYVLVCLGM), 416–436 (NILIFSLLSSAVTSGVIMVIP), 441–461 (VWLVVASMAGKFFIGAAFGLI), 476–496 (LAVGSGSTVGRVGSIVAPLCI), and 503–523 (IFMPQLLVGTLALVSGVLTFL). The N-linked (GlcNAc...) asparagine glycan is linked to Asn559.

The protein belongs to the major facilitator (TC 2.A.1) superfamily. Organic cation transporter (TC 2.A.1.19) family.

The protein localises to the cell membrane. The catalysed reaction is (R)-carnitine(in) = (R)-carnitine(out). The enzyme catalyses spermidine(in) = spermidine(out). In terms of biological role, facilitative organic cation transporter that mediates the transport of carnitine as well as the polyamine spermidine. Mediates the partially Na(+)-dependent bidirectional transport of carnitine. May mediate L-carnitine secretion from testis epididymal epithelium into the lumen which is involved in the maturation of spermatozoa. The protein is Solute carrier family 22 member 16 (SLC22A16) of Bos taurus (Bovine).